A 111-amino-acid chain; its full sequence is Cell cycle protein GpsB (111 aa).

Residues 38–72 (IKDYEAFHKEFEQLKQQNARLKRELEEQKLAVTQV) are a coiled coil.

The protein belongs to the GpsB family. As to quaternary structure, forms polymers through the coiled coil domains. Interacts with PBP1, MreC and EzrA.

The protein localises to the cytoplasm. In terms of biological role, divisome component that associates with the complex late in its assembly, after the Z-ring is formed, and is dependent on DivIC and PBP2B for its recruitment to the divisome. Together with EzrA, is a key component of the system that regulates PBP1 localization during cell cycle progression. Its main role could be the removal of PBP1 from the cell pole after pole maturation is completed. Also contributes to the recruitment of PBP1 to the division complex. Not essential for septum formation. This chain is Cell cycle protein GpsB, found in Bacillus cereus (strain G9842).